Reading from the N-terminus, the 370-residue chain is MPSAKPLFCLATLAGAALAAPAPSRATDFNKRSTCTFTDAATASESKTSCSDIVLKDITVPAGETLNLKDLNDGTTVTFEGTTTWEYEEWDGPLLRISGKDITVTQSSDAVLNGNGAKWWDGEGTNGGKTKPKFFYAHDLDDSKISGLYIKNTPVQAISVESDNLVIEDVTIDNSDGDSEGGHNTDGFDISESTYITITGATVKNQGDCVAINSGENIYFSGGTCSGGHGLSIGSVGGRDDNTVKNVTFIDSTVSDSENGVRIKTVYDATGTVEDITYSNIQLSGISDYGIVIEQDYENGDPTGTPSNGVTISDVTLEDITGSVDSDAVEIYILCGDGSCTDWTMSGIDITGGETSSDCENVPSGASCSQ.

Residues 1–19 (MPSAKPLFCLATLAGAALA) form the signal peptide. Residues 20 to 32 (APAPSRATDFNKR) constitute a propeptide that is removed on maturation. Cysteine 35 and cysteine 50 are oxidised to a cystine. 6 PbH1 repeats span residues 162–192 (SDNL…DISE), 193–214 (STYI…AINS), 215–235 (GENI…SIGS), 244–265 (VKNV…RIKT), 273–295 (VEDI…VIEQ), and 307–352 (SNGV…DITG). The cysteines at positions 209 and 225 are disulfide-linked. Residue histidine 229 is part of the active site. Asparagine 246 carries N-linked (GlcNAc...) asparagine glycosylation. Disulfide bonds link cysteine 335–cysteine 340 and cysteine 359–cysteine 368.

The protein belongs to the glycosyl hydrolase 28 family.

It is found in the secreted. The catalysed reaction is (1,4-alpha-D-galacturonosyl)n+m + H2O = (1,4-alpha-D-galacturonosyl)n + (1,4-alpha-D-galacturonosyl)m.. Functionally, involved in maceration and soft-rotting of plant tissue. Hydrolyzes the 1,4-alpha glycosidic bonds of de-esterified pectate in the smooth region of the plant cell wall. The polypeptide is Endopolygalacturonase A (pgaA) (Aspergillus awamori (Black koji mold)).